Here is a 392-residue protein sequence, read N- to C-terminus: MKHIIHFDCFAGISGDMTVAALLDLGVPLEHLRDELARLDLPRDSYSLSIHRTERRHLAALRFDVQVLDQRTERGYAAIDGLIAASSLSGPVRERARAIFRRLAEAEALVHGVAVGEVHFHEVGAVDSIVDIVGTAICLDYLGVDGLSAAPLPLGSGFVHTAHGVLPVPAPATAELLKGMAVHGECGPGERVTPTGAAILAALATSVTAQPAMTVTAVGSGAGSRDFPDVPNILRAFLGRPEGEMSDGVLVAETNIDDSTPELLGYVMELLLEAGALDVFFTPIQMKKNRPGVQLSFLCRSGLLERLAALVLVETSAIGIRHYPVSRTTLERCMEERETPFGPLPFKLLFHDGRPLRAAPEYEACRRVARERGIPLQEVIRIVSQPTVVEGG.

This sequence belongs to the LarC family.

The polypeptide is Putative nickel insertion protein (Pelobacter propionicus (strain DSM 2379 / NBRC 103807 / OttBd1)).